Consider the following 228-residue polypeptide: Rab-like protein 2B (228 aa).

Residues 28 to 35, 76 to 80, and 133 to 136 each bind GTP; these read GDSAVGKS, DTAGQ, and NKID. A disordered region spans residues 200-228; it reads LEQEEEDVPDQEQSSSIETPSEEAASPHS.

This sequence belongs to the small GTPase superfamily. Rab family. In terms of assembly, interacts (in its GTP-bound form) with CEP19 (via residues 121-150); this interaction is required for its localization to the mother centriole and cilium basal body. Interacts (in its GTP-bound form) with the intraflagellar transport (IFT) complex B (via the IFT74-IFT81 heterodimer). Binding to CEP19 and the IFT74-IFT81 heterodimer is mutually exclusive. As to expression, expressed in the testis.

It localises to the cytoplasm. The protein resides in the cytoskeleton. It is found in the microtubule organizing center. Its subcellular location is the centrosome. The protein localises to the centriole. It localises to the cilium basal body. In terms of biological role, small GTPase required for ciliation. Activated in a guanine nucleotide exchange factor (GEF)-independent manner via its intrinsic GDP for GTP nucleotide exchange ability. Involved in ciliary assembly by binding the intraflagellar transport (IFT) complex B from the large pool pre-docked at the base of the cilium and thus triggers its entry into the cilia. The polypeptide is Rab-like protein 2B (RABL2B) (Homo sapiens (Human)).